Here is a 145-residue protein sequence, read N- to C-terminus: D-aminoacyl-tRNA deacylase (145 aa).

The Gly-cisPro motif, important for rejection of L-amino acids signature appears at 137 to 138 (GP).

It belongs to the DTD family. As to quaternary structure, homodimer.

It is found in the cytoplasm. It catalyses the reaction glycyl-tRNA(Ala) + H2O = tRNA(Ala) + glycine + H(+). The enzyme catalyses a D-aminoacyl-tRNA + H2O = a tRNA + a D-alpha-amino acid + H(+). Its function is as follows. An aminoacyl-tRNA editing enzyme that deacylates mischarged D-aminoacyl-tRNAs. Also deacylates mischarged glycyl-tRNA(Ala), protecting cells against glycine mischarging by AlaRS. Acts via tRNA-based rather than protein-based catalysis; rejects L-amino acids rather than detecting D-amino acids in the active site. By recycling D-aminoacyl-tRNA to D-amino acids and free tRNA molecules, this enzyme counteracts the toxicity associated with the formation of D-aminoacyl-tRNA entities in vivo and helps enforce protein L-homochirality. The sequence is that of D-aminoacyl-tRNA deacylase from Pseudomonas fluorescens (strain ATCC BAA-477 / NRRL B-23932 / Pf-5).